Here is a 341-residue protein sequence, read N- to C-terminus: Phosphate acyltransferase (341 aa).

It belongs to the PlsX family. Homodimer. Probably interacts with PlsY.

The protein resides in the cytoplasm. It catalyses the reaction a fatty acyl-[ACP] + phosphate = an acyl phosphate + holo-[ACP]. It participates in lipid metabolism; phospholipid metabolism. In terms of biological role, catalyzes the reversible formation of acyl-phosphate (acyl-PO(4)) from acyl-[acyl-carrier-protein] (acyl-ACP). This enzyme utilizes acyl-ACP as fatty acyl donor, but not acyl-CoA. The polypeptide is Phosphate acyltransferase (Vibrio parahaemolyticus serotype O3:K6 (strain RIMD 2210633)).